The primary structure comprises 369 residues: Serine proteinase inhibitor 1 (369 aa).

This sequence belongs to the serpin family. Poxviruses subfamily.

In terms of biological role, important in virulence. The polypeptide is Serine proteinase inhibitor 1 (SPI-1) (Oryctolagus cuniculus (Rabbit)).